Consider the following 249-residue polypeptide: 5'-nucleotidase SurE (249 aa).

4 residues coordinate a divalent metal cation: Asp-8, Asp-9, Ser-39, and Asn-96.

Belongs to the SurE nucleotidase family. Requires a divalent metal cation as cofactor.

The protein localises to the cytoplasm. The catalysed reaction is a ribonucleoside 5'-phosphate + H2O = a ribonucleoside + phosphate. In terms of biological role, nucleotidase that shows phosphatase activity on nucleoside 5'-monophosphates. The polypeptide is 5'-nucleotidase SurE (Clostridium tetani (strain Massachusetts / E88)).